The primary structure comprises 436 residues: uncharacterized protein (436 aa).

Residues 1–18 (MMKRFVALSMAIFSLSFA) form the signal peptide.

This is an uncharacterized protein from Aquifex aeolicus (strain VF5).